We begin with the raw amino-acid sequence, 103 residues long: Cell division protein FtsB (103 aa).

Over 1 to 3 (MGK) the chain is Cytoplasmic. A helical membrane pass occupies residues 4–21 (LTLLLLAILVWLQYSLWF). The Periplasmic segment spans residues 22-103 (GKNGIHDYSR…RAQTAGQNNR (82 aa)). Positions 31–71 (RVNDDVAAQQATNAKLKARNDQLFAEIDDLNGGQEALEERA) form a coiled coil.

Belongs to the FtsB family. Part of a complex composed of FtsB, FtsL and FtsQ.

It is found in the cell inner membrane. Its function is as follows. Essential cell division protein. May link together the upstream cell division proteins, which are predominantly cytoplasmic, with the downstream cell division proteins, which are predominantly periplasmic. In Escherichia fergusonii (strain ATCC 35469 / DSM 13698 / CCUG 18766 / IAM 14443 / JCM 21226 / LMG 7866 / NBRC 102419 / NCTC 12128 / CDC 0568-73), this protein is Cell division protein FtsB.